A 132-amino-acid polypeptide reads, in one-letter code: Small ribosomal subunit protein uS11 (132 aa).

This sequence belongs to the universal ribosomal protein uS11 family. In terms of assembly, part of the 30S ribosomal subunit. Interacts with proteins S7 and S18. Binds to IF-3.

Its function is as follows. Located on the platform of the 30S subunit, it bridges several disparate RNA helices of the 16S rRNA. Forms part of the Shine-Dalgarno cleft in the 70S ribosome. This Legionella pneumophila (strain Corby) protein is Small ribosomal subunit protein uS11.